Consider the following 156-residue polypeptide: Probable succinate transporter subunit YjjB (156 aa).

4 helical membrane passes run 7-27, 54-74, 86-106, and 128-148; these read WALLQDMVLAAIPALGFAMVF, FGMDIEPASLLASIMIGMIGI, VFTVAAVIPMFPGISAYTAMI, and FLKASFIVGSLSIGLSLPGLW.

The protein belongs to the ThrE exporter (TC 2.A.79) family. As to quaternary structure, the transporter is composed of YjjB and YjjP.

Its subcellular location is the cell inner membrane. Involved in succinate export with YjjP. Both proteins are required for export. The sequence is that of Probable succinate transporter subunit YjjB from Yersinia enterocolitica serotype O:8 / biotype 1B (strain NCTC 13174 / 8081).